Reading from the N-terminus, the 326-residue chain is Small ribosomal subunit biogenesis GTPase RsgA (326 aa).

The 162-residue stretch at leucine 80–phenylalanine 241 folds into the CP-type G domain. GTP is bound by residues asparagine 129–aspartate 132 and glycine 183–threonine 191. Residues cysteine 265, cysteine 270, histidine 272, and cysteine 278 each coordinate Zn(2+).

Belongs to the TRAFAC class YlqF/YawG GTPase family. RsgA subfamily. Monomer. Associates with 30S ribosomal subunit, binds 16S rRNA. Zn(2+) is required as a cofactor.

It localises to the cytoplasm. Functionally, one of several proteins that assist in the late maturation steps of the functional core of the 30S ribosomal subunit. Helps release RbfA from mature subunits. May play a role in the assembly of ribosomal proteins into the subunit. Circularly permuted GTPase that catalyzes slow GTP hydrolysis, GTPase activity is stimulated by the 30S ribosomal subunit. This chain is Small ribosomal subunit biogenesis GTPase RsgA, found in Flavobacterium psychrophilum (strain ATCC 49511 / DSM 21280 / CIP 103535 / JIP02/86).